Here is a 350-residue protein sequence, read N- to C-terminus: DNA-directed RNA polymerase subunit alpha (350 aa).

The alpha N-terminal domain (alpha-NTD) stretch occupies residues 1 to 226 (MLISQRPTLS…ELFGLARELN (226 aa)). The tract at residues 241 to 350 (ADHIASFALP…NQDYAETEQL (110 aa)) is alpha C-terminal domain (alpha-CTD). Residues 326-350 (ATGTWNSDAGYDLEDNQDYAETEQL) are disordered. Residues 336-350 (YDLEDNQDYAETEQL) show a composition bias toward acidic residues.

Belongs to the RNA polymerase alpha chain family. Homodimer. The RNAP catalytic core consists of 2 alpha, 1 beta, 1 beta' and 1 omega subunit. When a sigma factor is associated with the core the holoenzyme is formed, which can initiate transcription.

The catalysed reaction is RNA(n) + a ribonucleoside 5'-triphosphate = RNA(n+1) + diphosphate. DNA-dependent RNA polymerase catalyzes the transcription of DNA into RNA using the four ribonucleoside triphosphates as substrates. The polypeptide is DNA-directed RNA polymerase subunit alpha (Mycobacterium sp. (strain JLS)).